A 146-amino-acid chain; its full sequence is SMR1 protein (146 aa).

The N-terminal stretch at 1-22 (MKSLYLIFGLWILLACFQSGEG) is a signal peptide. Disordered regions lie at residues 23-43 (VRGP…TLPH) and 99-146 (TAPD…GGGK). Residues 109–139 (PPTQLHSTEQANTKTDAKISNTTATTQNSTD) show a composition bias toward polar residues. Residues asparagine 129 and asparagine 136 are each glycosylated (N-linked (GlcNAc...) asparagine).

In terms of processing, several O-linked glycosylation sites might be present in the C-terminal part. As to expression, expressed predominantly in the acinar cells of the submandibular gland and to lesser extent in the prostate.

The protein localises to the secreted. In terms of biological role, sialorphin may be involved in the modulation of mineral balance between at least four systems: kidney, bone, tooth and circulation. Functionally, submandibular gland peptide T is able to directly or indirectly down-regulate cardiovascular depression induced by septic shock (endotoxin stimuli), or anaphylactic challenge (nematode antigen sensitization). Its function is as follows. Sialorphin is an endogenous inhibitor of neprilysin. Inhibits the breakdown of Met-enkephalin and substance P in isolated tissue from the dorsal zone of the rat spinal cord. Has an analgesic effect when administered to rats by intravenous injection. The sequence is that of SMR1 protein (Vcsa1) from Rattus norvegicus (Rat).